The sequence spans 202 residues: Dephospho-CoA kinase (202 aa).

The DPCK domain occupies 5-202 (IVGLTGGIAS…DADYRARANP (198 aa)). 13–18 (ASGKSA) is a binding site for ATP.

It belongs to the CoaE family.

It localises to the cytoplasm. It catalyses the reaction 3'-dephospho-CoA + ATP = ADP + CoA + H(+). It functions in the pathway cofactor biosynthesis; coenzyme A biosynthesis; CoA from (R)-pantothenate: step 5/5. Functionally, catalyzes the phosphorylation of the 3'-hydroxyl group of dephosphocoenzyme A to form coenzyme A. The polypeptide is Dephospho-CoA kinase (Xanthomonas axonopodis pv. citri (strain 306)).